Here is a 1172-residue protein sequence, read N- to C-terminus: Lysylphosphatidylglycerol biosynthesis bifunctional protein LysX (1172 aa).

The disordered stretch occupies residues 1–34 (MGLHLTVPGLRRDGRGVQSNSHDTSSKTTADISR). The tract at residues 1-663 (MGLHLTVPGL…LLHHDGSAPD (663 aa)) is phosphatidylglycerol lysyltransferase. Positions 17–31 (VQSNSHDTSSKTTAD) are enriched in polar residues. Helical transmembrane passes span 80–100 (VPAA…LASV), 122–142 (FPDT…ALTA), 146–166 (IAWL…AAEI), 177–197 (FGEN…VLGY), 214–234 (AVWL…VELF), 272–292 (AIFG…LFLS), and 612–632 (VIPR…LPFS). Residues 664–1172 (VSGLRQVGLT…TLPFPLAKPH (509 aa)) are lysine--tRNA ligase. The segment at residues 726–804 (VSVSGRIMRI…SLIVSGWRLI (79 aa)) is a DNA-binding region (OB). Residues Asp1084 and Glu1091 each contribute to the Mg(2+) site.

This sequence in the N-terminal section; belongs to the LPG synthetase family. The protein in the C-terminal section; belongs to the class-II aminoacyl-tRNA synthetase family. Mg(2+) is required as a cofactor.

The protein localises to the cell membrane. The catalysed reaction is tRNA(Lys) + L-lysine + ATP = L-lysyl-tRNA(Lys) + AMP + diphosphate. It catalyses the reaction L-lysyl-tRNA(Lys) + a 1,2-diacyl-sn-glycero-3-phospho-(1'-sn-glycerol) = a 1,2-diacyl-sn-glycero-3-phospho-1'-(3'-O-L-lysyl)-sn-glycerol + tRNA(Lys). Catalyzes the production of L-lysyl-tRNA(Lys)transfer and the transfer of a lysyl group from L-lysyl-tRNA(Lys) to membrane-bound phosphatidylglycerol (PG), which produces lysylphosphatidylglycerol (LPG), one of the components of the bacterial membrane with a positive net charge. LPG synthesis contributes to the resistance to cationic antimicrobial peptides (CAMPs) and likely protects M.tuberculosis against the CAMPs produced by competiting microorganisms (bacteriocins). In fact, the modification of anionic phosphatidylglycerol with positively charged L-lysine results in repulsion of the peptides. This chain is Lysylphosphatidylglycerol biosynthesis bifunctional protein LysX (lysX), found in Mycobacterium tuberculosis (strain F11).